Here is a 201-residue protein sequence, read N- to C-terminus: Recombination protein RecR (201 aa).

The segment at 60 to 75 (CQVCGNVDVRDPCTVC) adopts a C4-type zinc-finger fold. A Toprim domain is found at 83–178 (SVLVVVAEVA…KVTRLAHGVP (96 aa)).

This sequence belongs to the RecR family.

In terms of biological role, may play a role in DNA repair. It seems to be involved in an RecBC-independent recombinational process of DNA repair. It may act with RecF and RecO. The sequence is that of Recombination protein RecR from Azorhizobium caulinodans (strain ATCC 43989 / DSM 5975 / JCM 20966 / LMG 6465 / NBRC 14845 / NCIMB 13405 / ORS 571).